The primary structure comprises 91 residues: Cytochrome b-c1 complex subunit 10, mitochondrial (91 aa).

The Mitochondrial matrix portion of the chain corresponds to 1–34 (MFATSILRSAYPAYKSPYGPKYQYQPHIDGITPK). Residues 35-58 (QLVRILPTAAAWTGVALFAVVYYA) traverse the membrane as a helical segment. Over 59–91 (SGIPRLRRDVLQRIPYLGERYFVNEIPASDNPF) the chain is Mitochondrial intermembrane.

This sequence belongs to the UQCR11/QCR10 family. Component of the ubiquinol-cytochrome c oxidoreductase (cytochrome b-c1 complex, complex III, CIII), a multisubunit enzyme composed of 10 subunits. The complex is composed of 3 respiratory subunits cytochrome b (cob), cytochrome c1 (cyt-1) and Rieske protein (fes-1), 2 core protein subunits pep and ucr-1, and 5 low-molecular weight protein subunits qcr6, qcr7, qcr8, qcr9 and probably NCU16844/qcr10. The complex exists as an obligatory dimer and forms supercomplexes (SCs) in the inner mitochondrial membrane with NADH-ubiquinone oxidoreductase (complex I, CI) and cytochrome c oxidase (complex IV, CIV), resulting in different assemblies (supercomplexes SCI(1)III(2), SCIII(2)IV(1) and SCIII(2)IV(2) as well as higher order I(x)III(y)IV(z) megacomplexes).

It localises to the mitochondrion inner membrane. Its function is as follows. Component of the ubiquinol-cytochrome c oxidoreductase, a multisubunit transmembrane complex that is part of the mitochondrial electron transport chain which drives oxidative phosphorylation. The respiratory chain contains 3 multisubunit complexes succinate dehydrogenase (complex II, CII), ubiquinol-cytochrome c oxidoreductase (cytochrome b-c1 complex, complex III, CIII) and cytochrome c oxidase (complex IV, CIV), that cooperate to transfer electrons derived from NADH and succinate to molecular oxygen, creating an electrochemical gradient over the inner membrane that drives transmembrane transport and the ATP synthase. The cytochrome b-c1 complex catalyzes electron transfer from ubiquinol to cytochrome c, linking this redox reaction to translocation of protons across the mitochondrial inner membrane, with protons being carried across the membrane as hydrogens on the quinol. In the process called Q cycle, 2 protons are consumed from the matrix, 4 protons are released into the intermembrane space and 2 electrons are passed to cytochrome c. This Neurospora crassa (strain ATCC 24698 / 74-OR23-1A / CBS 708.71 / DSM 1257 / FGSC 987) protein is Cytochrome b-c1 complex subunit 10, mitochondrial.